Reading from the N-terminus, the 914-residue chain is Transcription factor AZF1 (914 aa).

Disordered stretches follow at residues 1-63 (MPPP…ESIS), 93-124 (STGG…SQIG), and 138-275 (QQLQ…NSNQ). Polar residues predominate over residues 13 to 34 (QAGQNESQNQSSGEAGEQNQEH). Positions 44–56 (QSQPASSQPQHQQ) are enriched in low complexity. The residue at position 61 (S61) is a Phosphoserine. The segment covering 107 to 116 (PRLSTSSTHQ) has biased composition (polar residues). The polyglutamine domain stretch occupies residues 136-158 (QQQQLQNQHRQQQQQQQQQSHQQ). A compositionally biased stretch (low complexity) spans 138 to 158 (QQLQNQHRQQQQQQQQQSHQQ). Residues 164 to 194 (PSFSTGLTGSSSQYQFLPRNDNTSQPPSKRN) are compositionally biased toward polar residues. Composition is skewed to low complexity over residues 206 to 222 (FEFF…FQPS) and 245 to 275 (SNGT…NSNQ). 2 positions are modified to phosphoserine: S286 and S325. The disordered stretch occupies residues 326 to 415 (LSVNNKANGD…STDTTSNSRK (90 aa)). Residues 359–390 (DSSNNNNNNNNNNNNENNNDNNNDNNDNSINS) show a composition bias toward low complexity. The interval 362-386 (NNNNNNNNNNNNENNNDNNNDNNDN) is polyasparagine domain. The segment covering 391-412 (ATSTNIPNQEDHSLASTDTTSN) has biased composition (polar residues). C2H2-type zinc fingers lie at residues 593-615 (HECP…VRSH), 621-643 (FVCD…ERLH), 649-671 (YSCD…LVTH), and 677-702 (FVCK…NRFH). Disordered regions lie at residues 743-812 (GIKG…SPTQ) and 853-877 (RLGS…APGV). Positions 754 to 770 (KKSTISSPENHPASTIL) are enriched in polar residues. 3 stretches are compositionally biased toward low complexity: residues 771–782 (NPNTNANNAIAN), 796–809 (SSSN…SMIS), and 856–868 (SSSS…NNSN).

The protein resides in the nucleus. It is found in the cytoplasm. The protein localises to the cytosol. Transcription factor involved in the diauxic shift. In the presence of glucose, activates carbon and energy metabolism genes, and in te presence of glycerol-lactate, activates genes needed for cell wall maintenance. Binds to DNA elements with the sequence AAAAGAAA (A4GA3), a motif enriched in the promoters of AZF1-sensitive genes. Required for glucose induction of CLN3 transcription. Also required for proper FLO11 expression. May also function as a corepressor. Functionally, as an intrinsically disordered protein, AZF1 is capable of forming the prion [AZF1+] that confers resistance to the drug radicicol in a gain-of-function manner but decreases the expression of AZF1's target genes. This is Transcription factor AZF1 from Saccharomyces cerevisiae (strain ATCC 204508 / S288c) (Baker's yeast).